Consider the following 1449-residue polypeptide: MYNPYQQQQAAYNPQQQQTGFAGGFNQQQQYVQPQQTGYYNPNQPPSLPNQATGFYQPQQQGMFNASSFQNQPTGFAQQPSIQPQQTGYVQTQPTGFQQPGTNSAPTVTENSELKIPSMRLSFITAADQSKFEHLFRTAVPKGEQAISGDSARDILLRSGLQPITLAEIWSLADTNKSGSLLFPEFALALHLCNLSLKGDPLPTMLPEKWSNEVKSFVDAISFSVPENPANILSNTPFASSGASSNPINNDWMAPQATGFNNSGAVPSTSFQAQPTGFGASQEMMAQRTGNPPLPQQATGFGSNNVAPLLPQRTGGGTLIPLQPQQTSNLIPAQKTGPLQPQTTGFQTQNPHQTGPGALQPQSTGFAQRMNNGPLQAQTTGFQQQTTGFQPQSTGFQPQSTGFQPQSTGFQPQQTGPLQAQPTGKPGQWGFVSTPTGGIPGMNAMEQHFLPSSQLPTNNLQNAMGGSLKTNVTWSITKQEKQIYDGVFSAWDSRNKGFIDGEVAINIFGKSGLARPDLESIWNLADTNNRGKLNKDEFAVAMHLVYRRLNGFDLPLRLPPELVPPSTKHIQDSMDTLKNSLKSGSAKSSPPVKPGKTDGKRYKNDDSNFGYVSNVRHRKKNVSNNDSSNGDEKPSHNSDLTIADLKKLVREKKILLDAVDAEDQDAAISNRQMESRNYQEIDSLKQQIRKIQSQLNDNVSSSGSIGERKQLMDKLNYLTRDKVPGLISKIHQVNKDIATSKVELFKLKLSKENPDWQPEDAEAGIVGTGVNGEVTDADRQKFKSKQLLKQRMAALTGKSHGSGNELDVKLHQEIKNTRSEGEIQSGMINDIEASIKDLEDGCAANLQVTNKEEVGTDKWENGNNLNEEVAKFVRELNSSKPKQQSSSQVNSTLSQGQPQTQPQSNNVEAGIVSPQVTGASDSSTASHEYRTPEERSAYIKAQAEKRMNERLAKLGLTRHMTSGSSSTIEQQTQNKTTSLYANSETSKNAERKLESQPEYQQQQQQQQQQQPPPPQRQQSQQEAQLQDKGTNGQPDSPRQVGQKPTEIMDNESDDDNEEYVALMKKKEEMEARERKRKLKKKQDKEARLEKLKREMEELKKKEEAGDSSDDEEPITEVASYGPSGSASKSSTTKSIEQPIVEEKTNEEQIAAPVVEADTFVPKTHDNNPFARIQNNSSTPGSNNGSKDNLFFKPEKEVKLDPKKAAAQRASQRGLGDFNDWSDEEENSSEDEGPNRAGAAQLASLLFGGMSQPVPKSSTVTPNQEFHDAEDIPHFDSQESKENNNGEYTSQPTSVIQEKPDAIDSTSEAQVKSIPVEVEAPSPDNFTPPPPPPPSNIPPLPNTSAPPPPPPPPPPMDTPPIPSSSAPPPPPPPPGAAPPLPNASVPPPPRGAPPLPGDSSLSSGTKQAPPSGGNVDIGALLGQIKTGSSLKKVDENEKRIADGAVVGRVL.

2 stretches are compositionally biased toward low complexity: residues 1-18 (MYNP…QQQQ) and 27-36 (QQQQYVQPQQ). The segment at 1–86 (MYNPYQQQQA…AQQPSIQPQQ (86 aa)) is disordered. The span at 49–86 (PNQATGFYQPQQQGMFNASSFQNQPTGFAQQPSIQPQQ) shows a compositional bias: polar residues. Residues 128–217 (DQSKFEHLFR…EKWSNEVKSF (90 aa)) enclose the EH 1 domain. The 36-residue stretch at 161–196 (LQPITLAEIWSLADTNKSGSLLFPEFALALHLCNLS) folds into the EF-hand 1 domain. 4 stretches are compositionally biased toward polar residues: residues 239-249 (ASSGASSNPIN), 258-275 (TGFN…QAQP), 296-306 (QQATGFGSNNV), and 323-353 (QPQQ…NPHQ). 2 disordered regions span residues 239-366 (ASSG…STGF) and 386-427 (TTGF…GKPG). Residues 386–397 (TTGFQPQSTGFQ) are compositionally biased toward low complexity. Over residues 398 to 422 (PQSTGFQPQSTGFQPQQTGPLQAQP) the composition is skewed to polar residues. The region spanning 480–569 (EKQIYDGVFS…PELVPPSTKH (90 aa)) is the EH 2 domain. An EF-hand 2 domain is found at 513–548 (LARPDLESIWNLADTNNRGKLNKDEFAVAMHLVYRR). Over residues 579-588 (NSLKSGSAKS) the composition is skewed to polar residues. 3 disordered regions span residues 579–638 (NSLK…SHNS), 877–935 (NSSK…PEER), and 956–1418 (LTRH…DIGA). Positions 595 to 606 (GKTDGKRYKNDD) are enriched in basic and acidic residues. Residues 878–888 (SSKPKQQSSSQ) are compositionally biased toward low complexity. Composition is skewed to polar residues over residues 889-907 (VNST…SNNV), 914-926 (PQVT…STAS), and 959-986 (HMTS…SETS). Composition is skewed to low complexity over residues 996-1009 (QPEY…QQQQ) and 1016-1026 (RQQSQQEAQLQ). The span at 1027 to 1036 (DKGTNGQPDS) shows a compositional bias: polar residues. Positions 1048 to 1058 (MDNESDDDNEE) are enriched in acidic residues. The stretch at 1050-1108 (NESDDDNEEYVALMKKKEEMEARERKRKLKKKQDKEARLEKLKREMEELKKKEEAGDSS) forms a coiled coil. Basic and acidic residues-rich tracts occupy residues 1064 to 1073 (KKKEEMEARE) and 1082 to 1104 (QDKE…KEEA). The segment covering 1105-1114 (GDSSDDEEPI) has biased composition (acidic residues). Low complexity-rich tracts occupy residues 1118 to 1134 (ASYG…TTKS) and 1174 to 1185 (NNSSTPGSNNGS). Residues 1192-1203 (KPEKEVKLDPKK) show a composition bias toward basic and acidic residues. Over residues 1219–1231 (DWSDEEENSSEDE) the composition is skewed to acidic residues. Positions 1253–1263 (VPKSSTVTPNQ) are enriched in polar residues. Basic and acidic residues predominate over residues 1264-1283 (EFHDAEDIPHFDSQESKENN). Positions 1284-1295 (NGEYTSQPTSVI) are enriched in polar residues. The segment covering 1325–1395 (FTPPPPPPPS…PPPRGAPPLP (71 aa)) has biased composition (pro residues). One can recognise a WH2 domain in the interval 1415–1432 (DIGALLGQIKTGSSLKKV).

Belongs to the PAN1 family. In terms of assembly, component of the PAN1 actin cytoskeleton-regulatory complex.

Its subcellular location is the cell membrane. The protein resides in the endosome membrane. It localises to the cytoplasm. It is found in the cytoskeleton. The protein localises to the actin patch. Component of the PAN1 actin cytoskeleton-regulatory complex required for the internalization of endosomes during actin-coupled endocytosis. The complex links the site of endocytosis to the cell membrane-associated actin cytoskeleton. Mediates uptake of external molecules and vacuolar degradation of plasma membrane proteins. Plays a role in the proper organization of the cell membrane-associated actin cytoskeleton and promotes its destabilization. This Debaryomyces hansenii (strain ATCC 36239 / CBS 767 / BCRC 21394 / JCM 1990 / NBRC 0083 / IGC 2968) (Yeast) protein is Actin cytoskeleton-regulatory complex protein PAN1 (PAN1).